A 151-amino-acid polypeptide reads, in one-letter code: U1 small nuclear ribonucleoprotein C (151 aa).

A Matrin-type zinc finger spans residues 4-36 (YYCDYCDTYLTHDSPSVRKTHCTGRKHKDNVKF).

The protein belongs to the U1 small nuclear ribonucleoprotein C family. U1 snRNP is composed of the 7 core Sm proteins B/B', D1, D2, D3, E, F and G that assemble in a heptameric protein ring on the Sm site of the small nuclear RNA to form the core snRNP, and at least 3 U1 snRNP-specific proteins U1-70K, U1-A and U1-C. U1-C interacts with U1 snRNA and the 5' splice-site region of the pre-mRNA.

It localises to the nucleus. Its function is as follows. Component of the spliceosomal U1 snRNP, which is essential for recognition of the pre-mRNA 5' splice-site and the subsequent assembly of the spliceosome. U1-C is directly involved in initial 5' splice-site recognition for both constitutive and regulated alternative splicing. The interaction with the 5' splice-site seems to precede base-pairing between the pre-mRNA and the U1 snRNA. Stimulates commitment or early (E) complex formation by stabilizing the base pairing of the 5' end of the U1 snRNA and the 5' splice-site region. This is U1 small nuclear ribonucleoprotein C from Anopheles darlingi (Mosquito).